The chain runs to 494 residues: Glutamyl-tRNA(Gln) amidotransferase subunit A (494 aa).

Catalysis depends on charge relay system residues Lys80 and Ser155. Ser179 serves as the catalytic Acyl-ester intermediate.

This sequence belongs to the amidase family. GatA subfamily. As to quaternary structure, heterotrimer of A, B and C subunits.

The enzyme catalyses L-glutamyl-tRNA(Gln) + L-glutamine + ATP + H2O = L-glutaminyl-tRNA(Gln) + L-glutamate + ADP + phosphate + H(+). Allows the formation of correctly charged Gln-tRNA(Gln) through the transamidation of misacylated Glu-tRNA(Gln) in organisms which lack glutaminyl-tRNA synthetase. The reaction takes place in the presence of glutamine and ATP through an activated gamma-phospho-Glu-tRNA(Gln). This Lachnoclostridium phytofermentans (strain ATCC 700394 / DSM 18823 / ISDg) (Clostridium phytofermentans) protein is Glutamyl-tRNA(Gln) amidotransferase subunit A.